Consider the following 320-residue polypeptide: Glutathione synthetase (320 aa).

The 186-residue stretch at 130-315 (KIFISWFSRF…ITGILIDYIE (186 aa)) folds into the ATP-grasp domain. 156-212 (WKEKNDIILKPLDAMGGKGVFRIKKDDPNFSVIVETLTNYEKKYCMIQTYLPEVQFG) is a binding site for ATP. Residues glutamate 286 and asparagine 288 each contribute to the Mg(2+) site.

It belongs to the prokaryotic GSH synthase family. Requires Mg(2+) as cofactor. The cofactor is Mn(2+).

The enzyme catalyses gamma-L-glutamyl-L-cysteine + glycine + ATP = glutathione + ADP + phosphate + H(+). The protein operates within sulfur metabolism; glutathione biosynthesis; glutathione from L-cysteine and L-glutamate: step 2/2. This chain is Glutathione synthetase, found in Buchnera aphidicola subsp. Schizaphis graminum (strain Sg).